A 189-amino-acid polypeptide reads, in one-letter code: Calcyphosin (189 aa).

4 consecutive EF-hand domains span residues 21 to 56 (LGIQ…LGLV), 57 to 92 (LDTA…PMSQ), 93 to 128 (AREA…RTHP), and 136 to 172 (TEEE…VSAS). Residues aspartate 34, aspartate 36, serine 38, serine 40, glutamate 45, aspartate 70, aspartate 72, serine 74, threonine 76, glutamate 81, aspartate 106, serine 108, aspartate 110, and aspartate 117 each contribute to the Ca(2+) site. At serine 40 the chain carries Phosphoserine; by PKA.

As to quaternary structure, monomer. Does not form oligomers in the presence of calcium. Phosphorylated in response to thyrotropin and cAMP. In terms of tissue distribution, detected in thyroid, salivary gland, lung, brain and cerebellum (at protein level).

Its subcellular location is the cytoplasm. Calcium-binding protein. May play a role in cellular signaling events (Potential). The polypeptide is Calcyphosin (CAPS) (Canis lupus familiaris (Dog)).